The sequence spans 144 residues: Large ribosomal subunit protein uL11 (144 aa).

This sequence belongs to the universal ribosomal protein uL11 family. As to quaternary structure, part of the ribosomal stalk of the 50S ribosomal subunit. Interacts with L10 and the large rRNA to form the base of the stalk. L10 forms an elongated spine to which L12 dimers bind in a sequential fashion forming a multimeric L10(L12)X complex. Post-translationally, one or more lysine residues are methylated.

Forms part of the ribosomal stalk which helps the ribosome interact with GTP-bound translation factors. The polypeptide is Large ribosomal subunit protein uL11 (Deinococcus deserti (strain DSM 17065 / CIP 109153 / LMG 22923 / VCD115)).